The primary structure comprises 213 residues: Orotidine 5'-phosphate decarboxylase (213 aa).

Residues aspartate 11, lysine 33, 61–70 (DLKLADIPNT), serine 113, 166–176 (PGVGAQGGKAS), glycine 189, and arginine 190 each bind substrate. The Proton donor role is filled by lysine 63.

It belongs to the OMP decarboxylase family. Type 1 subfamily. As to quaternary structure, homodimer.

It catalyses the reaction orotidine 5'-phosphate + H(+) = UMP + CO2. The protein operates within pyrimidine metabolism; UMP biosynthesis via de novo pathway; UMP from orotate: step 2/2. Catalyzes the decarboxylation of orotidine 5'-monophosphate (OMP) to uridine 5'-monophosphate (UMP). This is Orotidine 5'-phosphate decarboxylase from Thermococcus kodakarensis (strain ATCC BAA-918 / JCM 12380 / KOD1) (Pyrococcus kodakaraensis (strain KOD1)).